The chain runs to 340 residues: Probable protein phosphatase 2C 21 (340 aa).

The tract at residues M1–H21 is disordered. The 282-residue stretch at K24–F305 folds into the PPM-type phosphatase domain. Residues D58, G59, D254, and D296 each contribute to the Mn(2+) site. The interval D311–D340 is disordered. Residues A316–D340 show a composition bias toward basic and acidic residues.

This sequence belongs to the PP2C family. Requires Mg(2+) as cofactor. Mn(2+) is required as a cofactor.

It carries out the reaction O-phospho-L-seryl-[protein] + H2O = L-seryl-[protein] + phosphate. The catalysed reaction is O-phospho-L-threonyl-[protein] + H2O = L-threonyl-[protein] + phosphate. The polypeptide is Probable protein phosphatase 2C 21 (Oryza sativa subsp. japonica (Rice)).